We begin with the raw amino-acid sequence, 569 residues long: Urease subunit alpha (569 aa).

The Urease domain maps to 131–569 (GAIDSHIHFI…LPLAQRYLLL (439 aa)). Positions 136, 138, and 219 each coordinate Ni(2+). Lys219 bears the N6-carboxylysine mark. His221 serves as a coordination point for substrate. Ni(2+) contacts are provided by His248 and His274. The active-site Proton donor is His322. Asp362 contributes to the Ni(2+) binding site.

This sequence belongs to the metallo-dependent hydrolases superfamily. Urease alpha subunit family. In terms of assembly, heterotrimer of UreA (gamma), UreB (beta) and UreC (alpha) subunits. Three heterotrimers associate to form the active enzyme. The cofactor is Ni cation. Carboxylation allows a single lysine to coordinate two nickel ions.

Its subcellular location is the cytoplasm. It carries out the reaction urea + 2 H2O + H(+) = hydrogencarbonate + 2 NH4(+). It functions in the pathway nitrogen metabolism; urea degradation; CO(2) and NH(3) from urea (urease route): step 1/1. In Prochlorococcus marinus (strain NATL1A), this protein is Urease subunit alpha.